The chain runs to 440 residues: Serine/threonine-protein kinase VRK1 (440 aa).

Residues Trp37–Tyr317 enclose the Protein kinase domain. ATP is bound by residues Ile43–Ile51 and Lys71. Lys71 is covalently cross-linked (Glycyl lysine isopeptide (Lys-Gly) (interchain with G-Cter in SUMO2)). Asp177 (proton acceptor) is an active-site residue. Position 342 is a phosphoserine; by PLK3 (Ser342). Ser376 is modified (phosphoserine). Thr378 bears the Phosphothreonine mark. Composition is skewed to polar residues over residues Gln379–Ser391 and Ser398–Asp410. The disordered stretch occupies residues Gln379–Lys440. The required for interaction with the nucleosome stretch occupies residues Arg387–Gly393.

It belongs to the protein kinase superfamily. CK1 Ser/Thr protein kinase family. VRK subfamily. Interacts with HDAC1, KAT2B, SETDB1, KDM3A and KDM4A. Associates with the nucleosome through interactions with nucleosome DNA, histone H2A and histone H2B; the interaction with H2A and H2B is mediated by the nucleosome acidic patch, a cluster of negatively charged residues of H2A and H2B forming a cleft within the nucleosome core. Autophosphorylated at various serine and threonine residues. Autophosphorylation does not impair its ability to phosphorylate p53/TP53. Phosphorylation by PLK3 leads to induction of Golgi fragmentation during mitosis. As to expression, highly expressed in testis. Expressed in liver, kidney and muscle. Weakly expressed in thymus, bone marrow and spleen.

Its subcellular location is the nucleus. The protein localises to the cytoplasm. It is found in the cajal body. The catalysed reaction is L-seryl-[protein] + ATP = O-phospho-L-seryl-[protein] + ADP + H(+). It carries out the reaction L-threonyl-[protein] + ATP = O-phospho-L-threonyl-[protein] + ADP + H(+). With respect to regulation, active in presence of Mn(2+), Mg(2+) and Zn(2+), but is not functional with Ca(2+) or Cu(2+). Has a higher affinity for Mn(2+) than for Mg(2+). RAN inhibits its autophosphorylation and its ability to phosphorylate histone H3. Serine/threonine kinase involved in the regulation of key cellular processes including the cell cycle, nuclear condensation, transcription regulation, and DNA damage response. Controls chromatin organization and remodeling by mediating phosphorylation of histone H3 on 'Thr-4' and histone H2AX (H2aXT4ph). It also phosphorylates KAT5 in response to DNA damage, promoting KAT5 association with chromatin and histone acetyltransferase activity. Is involved in the regulation of cell cycle progression of neural progenitors, and is required for proper cortical neuronal migration. Is involved in neurite elongation and branching in motor neurons, and has an essential role in Cajal bodies assembly, acting through COIL phosphorylation and the control of coilin degradation. Involved in Golgi disassembly during the cell cycle: following phosphorylation by PLK3 during mitosis, required to induce Golgi fragmentation. Phosphorylates BANF1: disrupts its ability to bind DNA, reduces its binding to LEM domain-containing proteins and causes its relocalization from the nucleus to the cytoplasm. Phosphorylates TP53BP1 and p53/TP53 on 'Thr-18', preventing the interaction between p53/TP53 and MDM2. Phosphorylates ATF2 which activates its transcriptional activity. Phosphorylates JUN. The sequence is that of Serine/threonine-protein kinase VRK1 from Mus musculus (Mouse).